Here is an 814-residue protein sequence, read N- to C-terminus: DNA gyrase subunit A (814 aa).

Positions 32 to 499 (LPDVRDGLKP…GVIEFREEDL (468 aa)) constitute a Topo IIA-type catalytic domain. Tyr-120 serves as the catalytic O-(5'-phospho-DNA)-tyrosine intermediate. The GyrA-box signature appears at 526-532 (QHRAGRG).

This sequence belongs to the type II topoisomerase GyrA/ParC subunit family. As to quaternary structure, heterotetramer, composed of two GyrA and two GyrB chains. In the heterotetramer, GyrA contains the active site tyrosine that forms a transient covalent intermediate with DNA, while GyrB binds cofactors and catalyzes ATP hydrolysis.

It localises to the cytoplasm. It carries out the reaction ATP-dependent breakage, passage and rejoining of double-stranded DNA.. Functionally, a type II topoisomerase that negatively supercoils closed circular double-stranded (ds) DNA in an ATP-dependent manner to modulate DNA topology and maintain chromosomes in an underwound state. Negative supercoiling favors strand separation, and DNA replication, transcription, recombination and repair, all of which involve strand separation. Also able to catalyze the interconversion of other topological isomers of dsDNA rings, including catenanes and knotted rings. Type II topoisomerases break and join 2 DNA strands simultaneously in an ATP-dependent manner. This is DNA gyrase subunit A from Dehalogenimonas lykanthroporepellens (strain ATCC BAA-1523 / JCM 15061 / BL-DC-9).